We begin with the raw amino-acid sequence, 192 residues long: Hydrophobin-like protein rodD (192 aa).

Cystine bridges form between C45-C106, C50-C99, and C107-C112.

It belongs to the fungal hydrophobin family. As to quaternary structure, self-assembles to form functional amyloid fibrils called rodlets. Self-assembly into fibrillar rodlets occurs spontaneously at hydrophobic:hydrophilic interfaces and the rodlets further associate laterally to form amphipathic monolayers.

Functionally, aerial growth, conidiation, and dispersal of filamentous fungi in the environment rely upon a capability of their secreting small amphipathic proteins called hydrophobins (HPBs) with low sequence identity. Class I can self-assemble into an outermost layer of rodlet bundles on aerial cell surfaces, conferring cellular hydrophobicity that supports fungal growth, development and dispersal; whereas Class II form highly ordered films at water-air interfaces through intermolecular interactions but contribute nothing to the rodlet structure. RodD is a an hydrophobin-like protein that, unlike rodA, is not required for rodlet formation. This chain is Hydrophobin-like protein rodD, found in Aspergillus fumigatus (strain ATCC MYA-4609 / CBS 101355 / FGSC A1100 / Af293) (Neosartorya fumigata).